We begin with the raw amino-acid sequence, 950 residues long: Lon protease homolog, mitochondrial (950 aa).

Residues 1–65 (MAASTGYVRL…VPMGGGQWRG (65 aa)) constitute a mitochondrion transit peptide. Disordered stretches follow at residues 67-94 (WDAG…SGEG) and 212-243 (PEGL…LGAK). Positions 112–360 (LPLIAISRNP…KALSLLKKEF (249 aa)) constitute a Lon N-terminal domain. A compositionally biased stretch (basic residues) spans 224–233 (KSRRKLKRGK). 513–520 (GPPGVGKT) is a binding site for ATP. Residues 749-939 (VTPPGVVMGL…RDIFRIAFPL (191 aa)) enclose the Lon proteolytic domain. Residues serine 845 and lysine 888 contribute to the active site.

It belongs to the peptidase S16 family. Homohexamer. Organized in a ring with a central cavity. The ATP-binding and proteolytic domains (AP-domain) form a hexameric chamber, while the N-terminal domain is arranged as a trimer of dimers. DNA and RNA binding is stimulated by substrate and inhibited by ATP binding. Interacts with TWNK and mitochondrial DNA polymerase subunit POLG.

The protein resides in the mitochondrion matrix. It catalyses the reaction Hydrolysis of proteins in presence of ATP.. In terms of biological role, ATP-dependent serine protease that mediates the selective degradation of misfolded, unassembled or oxidatively damaged polypeptides as well as certain short-lived regulatory proteins in the mitochondrial matrix. Endogenous substrates include mitochondrial steroidogenic acute regulatory (StAR) protein, DELE1, helicase Twinkle (TWNK) and the large ribosomal subunit protein MRPL32/bL32m. MRPL32/bL32m is protected from degradation by LONP1 when it is bound to a nucleic acid (RNA), but TWNK is not. May also have a chaperone function in the assembly of inner membrane protein complexes. Participates in the regulation of mitochondrial gene expression and in the maintenance of the integrity of the mitochondrial genome. Binds to mitochondrial promoters and RNA in a single-stranded, site-specific, and strand-specific manner. May regulate mitochondrial DNA replication and/or gene expression using site-specific, single-stranded DNA binding to target the degradation of regulatory proteins binding to adjacent sites in mitochondrial promoters. This is Lon protease homolog, mitochondrial (Lonp1) from Rattus norvegicus (Rat).